The chain runs to 37 residues: Cytochrome b6-f complex subunit 5 (37 aa).

The helical transmembrane segment at 5–25 (LLSGIVLGLMPVTLAGLFTTA) threads the bilayer.

It belongs to the PetG family. The 4 large subunits of the cytochrome b6-f complex are cytochrome b6, subunit IV (17 kDa polypeptide, PetD), cytochrome f and the Rieske protein, while the 4 small subunits are PetG, PetL, PetM and PetN. The complex functions as a dimer.

It is found in the plastid. Its subcellular location is the chloroplast thylakoid membrane. Component of the cytochrome b6-f complex, which mediates electron transfer between photosystem II (PSII) and photosystem I (PSI), cyclic electron flow around PSI, and state transitions. PetG is required for either the stability or assembly of the cytochrome b6-f complex. The sequence is that of Cytochrome b6-f complex subunit 5 from Ostreococcus tauri.